The following is a 183-amino-acid chain: ATP synthase subunit delta (183 aa).

It belongs to the ATPase delta chain family. F-type ATPases have 2 components, F(1) - the catalytic core - and F(0) - the membrane proton channel. F(1) has five subunits: alpha(3), beta(3), gamma(1), delta(1), epsilon(1). F(0) has three main subunits: a(1), b(2) and c(10-14). The alpha and beta chains form an alternating ring which encloses part of the gamma chain. F(1) is attached to F(0) by a central stalk formed by the gamma and epsilon chains, while a peripheral stalk is formed by the delta and b chains.

It is found in the cell inner membrane. F(1)F(0) ATP synthase produces ATP from ADP in the presence of a proton or sodium gradient. F-type ATPases consist of two structural domains, F(1) containing the extramembraneous catalytic core and F(0) containing the membrane proton channel, linked together by a central stalk and a peripheral stalk. During catalysis, ATP synthesis in the catalytic domain of F(1) is coupled via a rotary mechanism of the central stalk subunits to proton translocation. Functionally, this protein is part of the stalk that links CF(0) to CF(1). It either transmits conformational changes from CF(0) to CF(1) or is implicated in proton conduction. The chain is ATP synthase subunit delta from Ruthia magnifica subsp. Calyptogena magnifica.